Consider the following 511-residue polypeptide: Mannosyl-oligosaccharide alpha-1,2-mannosidase (511 aa).

The first 35 residues, 1 to 35, serve as a signal peptide directing secretion; the sequence is MRLPVSFPLTVLSLLGSTIAHPYGETEAVLRSEPK. A glycan (N-linked (GlcNAc...) asparagine) is linked at asparagine 182. Cysteine 332 and cysteine 361 are oxidised to a cystine. Asparagine 366 carries N-linked (GlcNAc...) asparagine glycosylation. The active-site Proton donor is the aspartate 375. N-linked (GlcNAc...) asparagine glycosylation is present at asparagine 438. A Ca(2+)-binding site is contributed by threonine 501.

This sequence belongs to the glycosyl hydrolase 47 family. As to quaternary structure, homodimer. Requires Ca(2+) as cofactor.

It is found in the secreted. The catalysed reaction is N(4)-(alpha-D-Man-(1-&gt;2)-alpha-D-Man-(1-&gt;2)-alpha-D-Man-(1-&gt;3)-[alpha-D-Man-(1-&gt;2)-alpha-D-Man-(1-&gt;3)-[alpha-D-Man-(1-&gt;2)-alpha-D-Man-(1-&gt;6)]-alpha-D-Man-(1-&gt;6)]-beta-D-Man-(1-&gt;4)-beta-D-GlcNAc-(1-&gt;4)-beta-D-GlcNAc)-L-asparaginyl-[protein] (N-glucan mannose isomer 9A1,2,3B1,2,3) + 4 H2O = N(4)-(alpha-D-Man-(1-&gt;3)-[alpha-D-Man-(1-&gt;3)-[alpha-D-Man-(1-&gt;6)]-alpha-D-Man-(1-&gt;6)]-beta-D-Man-(1-&gt;4)-beta-D-GlcNAc-(1-&gt;4)-beta-D-GlcNAc)-L-asparaginyl-[protein] (N-glucan mannose isomer 5A1,2) + 4 beta-D-mannose. The enzyme catalyses N(4)-(alpha-D-Man-(1-&gt;2)-alpha-D-Man-(1-&gt;2)-alpha-D-Man-(1-&gt;3)-[alpha-D-Man-(1-&gt;3)-[alpha-D-Man-(1-&gt;2)-alpha-D-Man-(1-&gt;6)]-alpha-D-Man-(1-&gt;6)]-beta-D-Man-(1-&gt;4)-beta-D-GlcNAc-(1-&gt;4)-beta-D-GlcNAc)-L-asparaginyl-[protein] (N-glucan mannose isomer 8A1,2,3B1,3) + 3 H2O = N(4)-(alpha-D-Man-(1-&gt;3)-[alpha-D-Man-(1-&gt;3)-[alpha-D-Man-(1-&gt;6)]-alpha-D-Man-(1-&gt;6)]-beta-D-Man-(1-&gt;4)-beta-D-GlcNAc-(1-&gt;4)-beta-D-GlcNAc)-L-asparaginyl-[protein] (N-glucan mannose isomer 5A1,2) + 3 beta-D-mannose. The protein operates within protein modification; protein glycosylation. In terms of biological role, involved in the maturation of Asn-linked oligosaccharides. Progressively trim alpha-1,2-linked mannose residues from Man(9)GlcNAc(2) to produce Man(5)GlcNAc(2). This chain is Mannosyl-oligosaccharide alpha-1,2-mannosidase (MSDC), found in Penicillium citrinum.